The primary structure comprises 233 residues: Large ribosomal subunit protein uL1 (233 aa).

This sequence belongs to the universal ribosomal protein uL1 family. As to quaternary structure, part of the 50S ribosomal subunit.

Binds directly to 23S rRNA. The L1 stalk is quite mobile in the ribosome, and is involved in E site tRNA release. Its function is as follows. Protein L1 is also a translational repressor protein, it controls the translation of the L11 operon by binding to its mRNA. In Campylobacter jejuni subsp. doylei (strain ATCC BAA-1458 / RM4099 / 269.97), this protein is Large ribosomal subunit protein uL1.